The primary structure comprises 175 residues: Epididymal-specific lipocalin-8 (175 aa).

The signal sequence occupies residues 1–25 (MPGAAEALPTVTVTLVAGAVPPASG). N-linked (GlcNAc...) asparagine glycosylation is found at Asn-66 and Asn-74. Cysteines 79 and 166 form a disulfide.

It belongs to the calycin superfamily. Lipocalin family.

Its subcellular location is the secreted. Its function is as follows. May play a role in male fertility. May act as a retinoid carrier protein within the epididymis. In Homo sapiens (Human), this protein is Epididymal-specific lipocalin-8 (LCN8).